Here is a 70-residue protein sequence, read N- to C-terminus: Large ribosomal subunit protein bL31 (70 aa).

C16, C18, C37, and C40 together coordinate Zn(2+).

Belongs to the bacterial ribosomal protein bL31 family. Type A subfamily. Part of the 50S ribosomal subunit. Requires Zn(2+) as cofactor.

Functionally, binds the 23S rRNA. In Cronobacter sakazakii (strain ATCC BAA-894) (Enterobacter sakazakii), this protein is Large ribosomal subunit protein bL31.